The following is a 153-amino-acid chain: Arachidonate 5-lipoxygenase-activating protein (153 aa).

The Lumenal segment spans residues 1 to 8; the sequence is MDQEAVGN. The chain crosses the membrane as a helical span at residues 9-30; that stretch reads VVLLAIVTLISVVQNGFFAHKV. Topologically, residues 31 to 52 are cytoplasmic; that stretch reads EHESRNQNGRSFQRTGTLAFER. The helical transmembrane segment at 53 to 77 threads the bilayer; that stretch reads VYTANQNCVDAYPTFLAVLWTAGLL. Topologically, residues 78–80 are lumenal; that stretch reads CSQ. A helical membrane pass occupies residues 81–102; the sequence is VPAAFAGLMYLFVRQKYFVGYL. At 103 to 107 the chain is on the cytoplasmic side; sequence GERTQ. Residues 108-115 lie within the membrane without spanning it; that stretch reads STPGYIFG. A helical transmembrane segment spans residues 116-128; it reads KRIILFLFLMSLA. Residues 129–153 are Lumenal-facing; the sequence is GILNYCLILLFGSDFENYIKTISTT.

This sequence belongs to the MAPEG family. In terms of assembly, homotrimer. Interacts with LTC4S and ALOX5.

The protein localises to the nucleus membrane. It is found in the endoplasmic reticulum membrane. Required for leukotriene biosynthesis by ALOX5 (5-lipoxygenase). Anchors ALOX5 to the membrane. Binds arachidonic acid, and could play an essential role in the transfer of arachidonic acid to ALOX5. Binds to MK-886, a compound that blocks the biosynthesis of leukotrienes. The chain is Arachidonate 5-lipoxygenase-activating protein (ALOX5AP) from Oryctolagus cuniculus (Rabbit).